Here is a 122-residue protein sequence, read N- to C-terminus: Vitelline membrane protein Vm32E (122 aa).

The first 19 residues, 1 to 19, serve as a signal peptide directing secretion; that stretch reads MKTVAFLAVVVLFAAFACA. Residues 40–79 form the VM domain; the sequence is SVPAPPCPKNYLFSCQPNLVPAPCAQQAAPAAYGSAGAYT.

Belongs to the vitelline membrane family.

It is found in the secreted. Major early eggshell protein. The protein is Vitelline membrane protein Vm32E of Drosophila persimilis (Fruit fly).